An 824-amino-acid polypeptide reads, in one-letter code: DNA replication helicase (824 aa).

Residue 90 to 97 (GTAGAGKT) coordinates ATP.

Belongs to the herpesviridae helicase family. In terms of assembly, associates with the primase and the primase-associated factor to form the helicase-primase complex.

The protein localises to the host nucleus. Its function is as follows. Component of the helicase/primase complex. Unwinds the DNA at the replication forks and generates single-stranded DNA for both leading and lagging strand synthesis. The primase synthesizes short RNA primers on the lagging strand that the polymerase elongates using dNTPs. Possesses helicase-like motifs and therefore may act as the helicase subunit of the complex. The protein is DNA replication helicase of Human herpesvirus 6A (strain Uganda-1102) (HHV-6 variant A).